We begin with the raw amino-acid sequence, 293 residues long: Non-homologous end joining protein Ku (293 aa).

The 186-residue stretch at 10–195 folds into the Ku domain; that stretch reads ISFGLVHIPV…KLDKRELEMA (186 aa). The segment at 216–229 is required for dimerization; it reads SDKIMKLVEEKAAK. The segment at 260–293 is disordered; that stretch reads RSRAGGGKDKGSEKAGADAKGRAKSGASRSRRKA. Residues 265–280 show a composition bias toward basic and acidic residues; that stretch reads GGKDKGSEKAGADAKG.

The protein belongs to the prokaryotic Ku family. Homodimer, may form higher-order multimers on DNA. Non-dimerized protein does not stimulate LigD ligase activity. Probably interacts with LigD.

With LigD forms a non-homologous end joining (NHEJ) DNA repair enzyme, which repairs dsDNA breaks with reduced fidelity. Stimulates rNTP addition to DSB and end joining (ligation) of linear DNA by LigD, on 3'-overhangs and probably also 5'-overhangs and blunt dsDNA breaks. Binds both ends of linear dsDNA protecting it from exonuclease activity. The polypeptide is Non-homologous end joining protein Ku (Pseudomonas aeruginosa (strain ATCC 15692 / DSM 22644 / CIP 104116 / JCM 14847 / LMG 12228 / 1C / PRS 101 / PAO1)).